Reading from the N-terminus, the 23-residue chain is GLWQLIKDKIKDAATGFVTGIQS.

As to expression, expressed by the skin dorsal glands.

The protein localises to the secreted. Its function is as follows. Has no antimicrobial activity. This is Dahlein-4.1 from Ranoidea dahlii (Dahl's aquatic frog).